Reading from the N-terminus, the 980-residue chain is Peroxisomal ATPase PEX6 (980 aa).

Omega-N-methylarginine is present on arginine 119. ATP contacts are provided by residues 470 to 477 and 744 to 751; these read GPPGCGKT and GPPGTGKT.

It belongs to the AAA ATPase family. In terms of assembly, interacts with PEX1; forming the PEX1-PEX6 AAA ATPase complex, which is composed of a heterohexamer formed by a trimer of PEX1-PEX6 dimers. Interacts with PEX26; interaction is direct and promotes recruitment to peroxisomal membranes. Interacts with ZFAND6. As to expression, expressed in the retina, at higher levels in the photoreceptor layer at the joint between the outer and inner segments.

It is found in the cytoplasm. The protein resides in the cytosol. It localises to the peroxisome membrane. The protein localises to the cell projection. Its subcellular location is the cilium. It is found in the photoreceptor outer segment. It carries out the reaction ATP + H2O = ADP + phosphate + H(+). Component of the PEX1-PEX6 AAA ATPase complex, a protein dislocase complex that mediates the ATP-dependent extraction of the PEX5 receptor from peroxisomal membranes, an essential step for PEX5 recycling. Specifically recognizes PEX5 monoubiquitinated at 'Cys-11', and pulls it out of the peroxisome lumen through the PEX2-PEX10-PEX12 retrotranslocation channel. Extraction by the PEX1-PEX6 AAA ATPase complex is accompanied by unfolding of the TPR repeats and release of bound cargo from PEX5. This chain is Peroxisomal ATPase PEX6, found in Homo sapiens (Human).